Consider the following 1107-residue polypeptide: Enolase-phosphatase E1 (1107 aa).

2 residues coordinate Mg(2+): aspartate 19 and glutamate 21. Residues serine 152 to serine 153 and lysine 186 each bind substrate. Residue aspartate 211 participates in Mg(2+) binding. A disordered region spans residues serine 258 to serine 1107. Basic and acidic residues predominate over residues lysine 260–glutamate 289. A compositionally biased stretch (low complexity) spans glutamate 291–glycine 306. Residues aspartate 366–aspartate 376 show a composition bias toward acidic residues. Basic and acidic residues-rich tracts occupy residues valine 393 to glutamine 427 and glycine 435 to glutamate 462. A compositionally biased stretch (acidic residues) spans aspartate 475–alanine 485. 6 stretches are compositionally biased toward basic and acidic residues: residues valine 486–asparagine 512, aspartate 534–serine 548, threonine 572–glutamate 586, threonine 593–asparagine 604, lysine 610–alanine 686, and aspartate 693–aspartate 776. A compositionally biased stretch (low complexity) spans glutamate 794–glutamine 803. Basic and acidic residues-rich tracts occupy residues alanine 804–serine 838 and lysine 849–glycine 908. Over residues valine 909 to glutamate 919 the composition is skewed to low complexity. A compositionally biased stretch (acidic residues) spans valine 920–serine 935. 3 stretches are compositionally biased toward basic and acidic residues: residues aspartate 937–serine 957, aspartate 1001–serine 1028, and asparagine 1035–aspartate 1047. The span at threonine 1048 to valine 1083 shows a compositional bias: low complexity.

Belongs to the HAD-like hydrolase superfamily. MasA/MtnC family. In terms of assembly, monomer. Mg(2+) is required as a cofactor.

The protein localises to the cytoplasm. Its subcellular location is the nucleus. It carries out the reaction 5-methylsulfanyl-2,3-dioxopentyl phosphate + H2O = 1,2-dihydroxy-5-(methylsulfanyl)pent-1-en-3-one + phosphate. The protein operates within amino-acid biosynthesis; L-methionine biosynthesis via salvage pathway; L-methionine from S-methyl-5-thio-alpha-D-ribose 1-phosphate: step 3/6. It functions in the pathway amino-acid biosynthesis; L-methionine biosynthesis via salvage pathway; L-methionine from S-methyl-5-thio-alpha-D-ribose 1-phosphate: step 4/6. Bifunctional enzyme that catalyzes the enolization of 2,3-diketo-5-methylthiopentyl-1-phosphate (DK-MTP-1-P) into the intermediate 2-hydroxy-3-keto-5-methylthiopentenyl-1-phosphate (HK-MTPenyl-1-P), which is then dephosphorylated to form the acireductone 1,2-dihydroxy-3-keto-5-methylthiopentene (DHK-MTPene). This is Enolase-phosphatase E1 from Aedes aegypti (Yellowfever mosquito).